The primary structure comprises 147 residues: Hemoglobin subunit epsilon (147 aa).

The region spanning 3–147 (HFTAEEKSTI…VATALAHKYH (145 aa)) is the Globin domain. Phosphoserine occurs at positions 14 and 51. Heme b is bound by residues His64 and His93.

Belongs to the globin family. In terms of assembly, heterotetramer of two alpha chains and two epsilon chains in early embryonic hemoglobin Gower-2; two zeta chains and two epsilon chains in early embryonic hemoglobin Gower-1. In terms of tissue distribution, red blood cells.

In terms of biological role, the epsilon chain is a beta-type chain of early mammalian embryonic hemoglobin. The chain is Hemoglobin subunit epsilon (HBE1) from Propithecus verreauxi (White sifaka).